A 345-amino-acid polypeptide reads, in one-letter code: Ketol-acid reductoisomerase (NADP(+)) (345 aa).

A KARI N-terminal Rossmann domain is found at 2 to 182 (AKVYHDSSAD…GTTRAGVLET (181 aa)). Residues 25–28 (YGSQ), R48, S51, S53, and 83–86 (DTEQ) contribute to the NADP(+) site. H108 is a catalytic residue. G134 provides a ligand contact to NADP(+). The 146-residue stretch at 183 to 328 (TFKEETETDL…AQLRDMMTFL (146 aa)) folds into the KARI C-terminal knotted domain. The Mg(2+) site is built by D191, E195, E227, and E231. S252 is a substrate binding site.

Belongs to the ketol-acid reductoisomerase family. The cofactor is Mg(2+).

The enzyme catalyses (2R)-2,3-dihydroxy-3-methylbutanoate + NADP(+) = (2S)-2-acetolactate + NADPH + H(+). It carries out the reaction (2R,3R)-2,3-dihydroxy-3-methylpentanoate + NADP(+) = (S)-2-ethyl-2-hydroxy-3-oxobutanoate + NADPH + H(+). The protein operates within amino-acid biosynthesis; L-isoleucine biosynthesis; L-isoleucine from 2-oxobutanoate: step 2/4. Its pathway is amino-acid biosynthesis; L-valine biosynthesis; L-valine from pyruvate: step 2/4. Its function is as follows. Involved in the biosynthesis of branched-chain amino acids (BCAA). Catalyzes an alkyl-migration followed by a ketol-acid reduction of (S)-2-acetolactate (S2AL) to yield (R)-2,3-dihydroxy-isovalerate. In the isomerase reaction, S2AL is rearranged via a Mg-dependent methyl migration to produce 3-hydroxy-3-methyl-2-ketobutyrate (HMKB). In the reductase reaction, this 2-ketoacid undergoes a metal-dependent reduction by NADPH to yield (R)-2,3-dihydroxy-isovalerate. This is Ketol-acid reductoisomerase (NADP(+)) from Koribacter versatilis (strain Ellin345).